A 341-amino-acid chain; its full sequence is Retinol dehydrogenase 10 (341 aa).

A helical; Signal-anchor transmembrane segment spans residues 3–23 (IVLEFFLVTFKVLWAFVLAAA). Residue 40-64 (LITGAGSGLGRLFALEFARRRAQLV) coordinates NADP(+). Ser197 serves as a coordination point for substrate. Tyr210 functions as the Proton acceptor in the catalytic mechanism.

It belongs to the short-chain dehydrogenases/reductases (SDR) family.

It localises to the microsome membrane. The protein resides in the endoplasmic reticulum membrane. The catalysed reaction is all-trans-retinol + NADP(+) = all-trans-retinal + NADPH + H(+). It functions in the pathway cofactor metabolism; retinol metabolism. In terms of biological role, retinol dehydrogenase with a clear preference for NADP. Converts all-trans-retinol to all-trans-retinal. Has no detectable activity towards 11-cis-retinol, 9-cis-retinol and 13-cis-retinol. The chain is Retinol dehydrogenase 10 (rdh10) from Xenopus tropicalis (Western clawed frog).